The following is a 366-amino-acid chain: Aminomethyltransferase (366 aa).

It belongs to the GcvT family. The glycine cleavage system is composed of four proteins: P, T, L and H.

It catalyses the reaction N(6)-[(R)-S(8)-aminomethyldihydrolipoyl]-L-lysyl-[protein] + (6S)-5,6,7,8-tetrahydrofolate = N(6)-[(R)-dihydrolipoyl]-L-lysyl-[protein] + (6R)-5,10-methylene-5,6,7,8-tetrahydrofolate + NH4(+). Functionally, the glycine cleavage system catalyzes the degradation of glycine. This is Aminomethyltransferase from Bacillus velezensis (strain DSM 23117 / BGSC 10A6 / LMG 26770 / FZB42) (Bacillus amyloliquefaciens subsp. plantarum).